Consider the following 391-residue polypeptide: Arrestin-C (391 aa).

The segment covering 369-379 (ARQEPGGREES) has biased composition (basic and acidic residues). A disordered region spans residues 369–391 (ARQEPGGREESQEALAAEGDEGS).

The protein belongs to the arrestin family. Homodimer; disulfide-linked in response to retinal illumination. Interacts with CXCR4; the interaction is dependent on the C-terminal phosphorylation of CXCR4 and modulates the calcium ion mobilization activity of CXCR4. Interacts with GPR84.

It is found in the photoreceptor inner segment. It localises to the cell projection. The protein localises to the cilium. The protein resides in the photoreceptor outer segment. May play a role in an as yet undefined retina-specific signal transduction. Could bind to photoactivated-phosphorylated red/green opsins. In Sus scrofa (Pig), this protein is Arrestin-C (ARR3).